The chain runs to 2499 residues: Probable polyketide synthase 22 (2499 aa).

The Ketosynthase family 3 (KS3) domain occupies 11–430; sequence DNQVAIVGLG…GSNACVLLSE (420 aa). Residues cysteine 177, histidine 316, and histidine 354 each act as for beta-ketoacyl synthase activity in the active site. Residues 623-656 form an acyl/malonyl transferases region; the sequence is GITPSIIVGHSLGEVASAFCSGMIDLETACFVIY. Serine 633 functions as the For acyl/malonyl transferase activity in the catalytic mechanism. An N-terminal hotdog fold region spans residues 922-1044; that stretch reads APINQLGNKN…SRILMKSLDV (123 aa). The PKS/mFAS DH domain occupies 922-1209; it reads APINQLGNKN…IASTLSTKSE (288 aa). Catalysis depends on histidine 956, which acts as the Proton acceptor; for dehydratase activity. Residues 1059–1209 form a C-terminal hotdog fold region; sequence NWSTLKREQL…IASTLSTKSE (151 aa). The active-site Proton donor; for dehydratase activity is aspartate 1121. A Carrier domain is found at 2414–2491; sequence EKEFSIRQDI…QIINIVTTKV (78 aa). O-(pantetheine 4'-phosphoryl)serine is present on serine 2451.

It depends on pantetheine 4'-phosphate as a cofactor.

Its function is as follows. Probable polyketide synthase. This Dictyostelium discoideum (Social amoeba) protein is Probable polyketide synthase 22 (pks22).